A 380-amino-acid chain; its full sequence is MRILYRLLKMADDTVKCYLECCKSSHPKLPLPHNVPVIIGRTPELGITDKLCSRSQLELTSNCYKRYVLVKRLGANTSQINGIDIEKNKSSRLEEGQDLHVVNGKFPHRVYFTGCQNDTKTEKAVVPKLPTKSTDLTKSDLSIKQPERKKLKVSENKSKVLNSKIKPQEKFSSESVYAFDSPSPMSSRCEKKAESNKRAPTHKHWSQGLKASMEDPELVVKEDEQIVVIKDKYPKAKYHWLILPKDSISSTKNLSTDNIELLKHILKVGQELAAEVKDKQPDVEFRFGYHAVASMSQMHMHVISQDFQSSSFKTKKHWNSFTTDYFVDATDIINELETGGKVKDRRTMTSLLNEPLKCHRCKKPQKNIPTLKKHIDSCQK.

The FHA-like domain occupies 36 to 85; sequence PVIIGRTPELGITDKLCSRSQLELTSNCYKRYVLVKRLGANTSQINGIDI. Residues 176 to 207 form a disordered region; the sequence is VYAFDSPSPMSSRCEKKAESNKRAPTHKHWSQ. Residues 188 to 197 show a composition bias toward basic and acidic residues; that stretch reads RCEKKAESNK. The 107-residue stretch at 206–312 folds into the HIT domain; that stretch reads SQGLKASMED…ISQDFQSSSF (107 aa). Interaction with DNA substrate stretches follow at residues 231–235 and 294–295; these read DKYPK and SM. The short motif at 297–301 is the Histidine triad motif element; sequence QMHMH. The active-site Tele-AMP-histidine intermediate is His-299. The C2H2-type; atypical zinc finger occupies 356-378; it reads LKCHRCKKPQKNIPTLKKHIDSC.

The protein resides in the nucleus. The protein localises to the nucleoplasm. It is found in the nucleolus. It catalyses the reaction a 5'-end adenosine-5'-diphospho-5'-2'-deoxyribonucleoside-DNA + H2O = a 5'-end 5'-phospho-2'-deoxyribonucleoside-DNA + AMP + 2 H(+). The enzyme catalyses a 5'-end adenosine-5'-diphospho-5'-ribonucleoside-2'-deoxyribonucleotide-DNA + H2O = a 5'-end 5'-phospho-ribonucleoside-2'-deoxyribonucleotide-DNA + AMP + 2 H(+). It carries out the reaction a 3'-end 2'-deoxyribonucleotide-3'-diphospho-5'-guanosine-DNA + H2O = a 3'-end 2'-deoxyribonucleotide 3'-phosphate-DNA + GMP + 2 H(+). DNA-binding protein involved in single-strand DNA break repair, double-strand DNA break repair and base excision repair. Resolves abortive DNA ligation intermediates formed either at base excision sites, or when DNA ligases attempt to repair non-ligatable breaks induced by reactive oxygen species. Catalyzes the release of adenylate groups covalently linked to 5'-phosphate termini, resulting in the production of 5'-phosphate termini that can be efficiently rejoined. Also able to hydrolyze adenosine 5'-monophosphoramidate (AMP-NH(2)) and diadenosine tetraphosphate (AppppA), but with lower catalytic activity. Likewise, catalyzes the release of 3'-linked guanosine (DNAppG) and inosine (DNAppI) from DNA, but has higher specific activity with 5'-linked adenosine (AppDNA). The chain is Aprataxin (APTX) from Ciona intestinalis (Transparent sea squirt).